The following is a 227-amino-acid chain: Ribonuclease 3 (227 aa).

Residues 7-132 enclose the RNase III domain; that stretch reads LTAFMDRLGY…VIAAVYLDGG (126 aa). Residue E45 participates in Mg(2+) binding. Residue D49 is part of the active site. 2 residues coordinate Mg(2+): D118 and E121. Residue E121 is part of the active site. Positions 157 to 226 constitute a DRBM domain; sequence DAKTALQEWA…AKDLLAQLAG (70 aa).

It belongs to the ribonuclease III family. As to quaternary structure, homodimer. It depends on Mg(2+) as a cofactor.

Its subcellular location is the cytoplasm. It catalyses the reaction Endonucleolytic cleavage to 5'-phosphomonoester.. Its function is as follows. Digests double-stranded RNA. Involved in the processing of primary rRNA transcript to yield the immediate precursors to the large and small rRNAs (23S and 16S). Processes some mRNAs, and tRNAs when they are encoded in the rRNA operon. Processes pre-crRNA and tracrRNA of type II CRISPR loci if present in the organism. The polypeptide is Ribonuclease 3 (Jannaschia sp. (strain CCS1)).